A 275-amino-acid chain; its full sequence is NH(3)-dependent NAD(+) synthetase (275 aa).

47–54 (GISGGQDS) contacts ATP. Mg(2+) is bound at residue D53. A deamido-NAD(+)-binding site is contributed by R141. T161 provides a ligand contact to ATP. Mg(2+) is bound at residue E166. Residues K174 and D181 each coordinate deamido-NAD(+). The ATP site is built by K190 and T212. 261–262 (HK) contributes to the deamido-NAD(+) binding site.

This sequence belongs to the NAD synthetase family. Homodimer.

The catalysed reaction is deamido-NAD(+) + NH4(+) + ATP = AMP + diphosphate + NAD(+) + H(+). Its pathway is cofactor biosynthesis; NAD(+) biosynthesis; NAD(+) from deamido-NAD(+) (ammonia route): step 1/1. In terms of biological role, catalyzes the ATP-dependent amidation of deamido-NAD to form NAD. Uses ammonia as a nitrogen source. This is NH(3)-dependent NAD(+) synthetase from Latilactobacillus sakei subsp. sakei (strain 23K) (Lactobacillus sakei subsp. sakei).